The primary structure comprises 252 residues: ATP synthase subunit a (252 aa).

The next 6 membrane-spanning stretches (helical) occupy residues 29 to 49 (FTNS…FLFL), 87 to 107 (FFPL…LGLF), 117 to 137 (IIVT…YGFM), 146 to 166 (LFVP…IEVI), 188 to 208 (ITLK…AVGV), and 211 to 231 (SILP…VAFL).

The protein belongs to the ATPase A chain family. F-type ATPases have 2 components, CF(1) - the catalytic core - and CF(0) - the membrane proton channel. CF(1) has five subunits: alpha(3), beta(3), gamma(1), delta(1), epsilon(1). CF(0) has three main subunits: a(1), b(2) and c(9-12). The alpha and beta chains form an alternating ring which encloses part of the gamma chain. CF(1) is attached to CF(0) by a central stalk formed by the gamma and epsilon chains, while a peripheral stalk is formed by the delta and b chains.

Its subcellular location is the cell inner membrane. Functionally, key component of the proton channel; it plays a direct role in the translocation of protons across the membrane. This is ATP synthase subunit a from Mesorhizobium japonicum (strain LMG 29417 / CECT 9101 / MAFF 303099) (Mesorhizobium loti (strain MAFF 303099)).